We begin with the raw amino-acid sequence, 283 residues long: Protein/nucleic acid deglycase HchA (283 aa).

Residues His-86, Glu-91, and His-123 each contribute to the Zn(2+) site. Cys-185 functions as the Nucleophile in the catalytic mechanism.

This sequence belongs to the peptidase C56 family. HchA subfamily. As to quaternary structure, homodimer.

The protein resides in the cytoplasm. It catalyses the reaction N(omega)-(1-hydroxy-2-oxopropyl)-L-arginyl-[protein] + H2O = lactate + L-arginyl-[protein] + H(+). It carries out the reaction N(6)-(1-hydroxy-2-oxopropyl)-L-lysyl-[protein] + H2O = lactate + L-lysyl-[protein] + H(+). The catalysed reaction is S-(1-hydroxy-2-oxopropyl)-L-cysteinyl-[protein] + H2O = lactate + L-cysteinyl-[protein] + H(+). The enzyme catalyses N(omega)-(1-hydroxy-2-oxoethyl)-L-arginyl-[protein] + H2O = L-arginyl-[protein] + glycolate + H(+). It catalyses the reaction N(6)-(1-hydroxy-2-oxoethyl)-L-lysyl-[protein] + H2O = glycolate + L-lysyl-[protein] + H(+). It carries out the reaction S-(1-hydroxy-2-oxoethyl)-L-cysteinyl-[protein] + H2O = glycolate + L-cysteinyl-[protein] + H(+). The catalysed reaction is N(2)-(1-hydroxy-2-oxopropyl)-dGTP + H2O = lactate + dGTP + H(+). The enzyme catalyses N(2)-(1-hydroxy-2-oxopropyl)-GTP + H2O = lactate + GTP + H(+). It catalyses the reaction N(2)-(1-hydroxy-2-oxopropyl)-GDP + H2O = lactate + GDP + H(+). It carries out the reaction N(2)-(1-hydroxy-2-oxopropyl)-GMP + H2O = lactate + GMP + H(+). The catalysed reaction is N(2)-(1-hydroxy-2-oxoethyl)-dGTP + H2O = dGTP + glycolate + H(+). The enzyme catalyses N(2)-(1-hydroxy-2-oxoethyl)-GTP + H2O = glycolate + GTP + H(+). It catalyses the reaction N(2)-(1-hydroxy-2-oxoethyl)-GDP + H2O = glycolate + GDP + H(+). It carries out the reaction N(2)-(1-hydroxy-2-oxoethyl)-GMP + H2O = glycolate + GMP + H(+). The catalysed reaction is an N(2)-(1-hydroxy-2-oxopropyl)-guanosine in RNA + H2O = a guanosine in RNA + lactate + H(+). The enzyme catalyses an N(2)-(1-hydroxy-2-oxopropyl)-2'-deoxyguanosine in DNA + H2O = a 2'-deoxyguanosine in DNA + lactate + H(+). It catalyses the reaction an N(2)-(1-hydroxy-2-oxoethyl)-guanosine in RNA + H2O = a guanosine in RNA + glycolate + H(+). It carries out the reaction an N(2)-(1-hydroxy-2-oxoethyl)-2'-deoxyguanosine in DNA + H2O = a 2'-deoxyguanosine in DNA + glycolate + H(+). Protein and nucleotide deglycase that catalyzes the deglycation of the Maillard adducts formed between amino groups of proteins or nucleotides and reactive carbonyl groups of glyoxals. Thus, functions as a protein deglycase that repairs methylglyoxal- and glyoxal-glycated proteins, and releases repaired proteins and lactate or glycolate, respectively. Deglycates cysteine, arginine and lysine residues in proteins, and thus reactivates these proteins by reversing glycation by glyoxals. Acts on early glycation intermediates (hemithioacetals and aminocarbinols), preventing the formation of Schiff bases and advanced glycation endproducts (AGE). Also functions as a nucleotide deglycase able to repair glycated guanine in the free nucleotide pool (GTP, GDP, GMP, dGTP) and in DNA and RNA. Is thus involved in a major nucleotide repair system named guanine glycation repair (GG repair), dedicated to reversing methylglyoxal and glyoxal damage via nucleotide sanitization and direct nucleic acid repair. Plays an important role in protecting cells from carbonyl stress. The polypeptide is Protein/nucleic acid deglycase HchA (Escherichia coli O7:K1 (strain IAI39 / ExPEC)).